The sequence spans 416 residues: Bifunctional protein GlmU (416 aa).

The segment at 1–229 is pyrophosphorylase; that stretch reads MTNYAIILAA…FNESLGVNDR (229 aa). UDP-N-acetyl-alpha-D-glucosamine-binding positions include 8-11, Lys22, Gln72, and 77-78; these read LAAG and GT. Asp102 provides a ligand contact to Mg(2+). The UDP-N-acetyl-alpha-D-glucosamine site is built by Gly139, Glu154, Asn169, and Asn227. Asn227 is a binding site for Mg(2+). Residues 230 to 250 are linker; sequence VALATAETVMRQRITQKHMVN. Residues 251–416 form an N-acetyltransferase region; that stretch reads GVTFQNPETV…DSHCTFGSWR (166 aa). Arg332 and Lys350 together coordinate UDP-N-acetyl-alpha-D-glucosamine. Residue His362 is the Proton acceptor of the active site. Positions 365 and 376 each coordinate UDP-N-acetyl-alpha-D-glucosamine. Acetyl-CoA contacts are provided by residues Ala379 and 385–386; that span reads NY.

This sequence in the N-terminal section; belongs to the N-acetylglucosamine-1-phosphate uridyltransferase family. In the C-terminal section; belongs to the transferase hexapeptide repeat family. Homotrimer. Requires Mg(2+) as cofactor.

It localises to the cytoplasm. The enzyme catalyses alpha-D-glucosamine 1-phosphate + acetyl-CoA = N-acetyl-alpha-D-glucosamine 1-phosphate + CoA + H(+). The catalysed reaction is N-acetyl-alpha-D-glucosamine 1-phosphate + UTP + H(+) = UDP-N-acetyl-alpha-D-glucosamine + diphosphate. It functions in the pathway nucleotide-sugar biosynthesis; UDP-N-acetyl-alpha-D-glucosamine biosynthesis; N-acetyl-alpha-D-glucosamine 1-phosphate from alpha-D-glucosamine 6-phosphate (route II): step 2/2. Its pathway is nucleotide-sugar biosynthesis; UDP-N-acetyl-alpha-D-glucosamine biosynthesis; UDP-N-acetyl-alpha-D-glucosamine from N-acetyl-alpha-D-glucosamine 1-phosphate: step 1/1. The protein operates within bacterial outer membrane biogenesis; LPS lipid A biosynthesis. In terms of biological role, catalyzes the last two sequential reactions in the de novo biosynthetic pathway for UDP-N-acetylglucosamine (UDP-GlcNAc). The C-terminal domain catalyzes the transfer of acetyl group from acetyl coenzyme A to glucosamine-1-phosphate (GlcN-1-P) to produce N-acetylglucosamine-1-phosphate (GlcNAc-1-P), which is converted into UDP-GlcNAc by the transfer of uridine 5-monophosphate (from uridine 5-triphosphate), a reaction catalyzed by the N-terminal domain. The chain is Bifunctional protein GlmU from Streptococcus pyogenes serotype M12 (strain MGAS2096).